A 271-amino-acid chain; its full sequence is Pyrroline-5-carboxylate reductase (271 aa).

The protein belongs to the pyrroline-5-carboxylate reductase family.

Its subcellular location is the cytoplasm. The enzyme catalyses L-proline + NADP(+) = (S)-1-pyrroline-5-carboxylate + NADPH + 2 H(+). The catalysed reaction is L-proline + NAD(+) = (S)-1-pyrroline-5-carboxylate + NADH + 2 H(+). It functions in the pathway amino-acid biosynthesis; L-proline biosynthesis; L-proline from L-glutamate 5-semialdehyde: step 1/1. Its function is as follows. Catalyzes the reduction of 1-pyrroline-5-carboxylate (PCA) to L-proline. This chain is Pyrroline-5-carboxylate reductase, found in Staphylococcus saprophyticus subsp. saprophyticus (strain ATCC 15305 / DSM 20229 / NCIMB 8711 / NCTC 7292 / S-41).